Here is a 485-residue protein sequence, read N- to C-terminus: Glycogen synthase (485 aa).

ADP-alpha-D-glucose is bound at residue K15.

This sequence belongs to the glycosyltransferase 1 family. Bacterial/plant glycogen synthase subfamily.

The enzyme catalyses [(1-&gt;4)-alpha-D-glucosyl](n) + ADP-alpha-D-glucose = [(1-&gt;4)-alpha-D-glucosyl](n+1) + ADP + H(+). The protein operates within glycan biosynthesis; glycogen biosynthesis. Synthesizes alpha-1,4-glucan chains using ADP-glucose. The protein is Glycogen synthase of Francisella philomiragia subsp. philomiragia (strain ATCC 25017 / CCUG 19701 / FSC 153 / O#319-036).